The sequence spans 784 residues: Alpha-catulin (784 aa).

Residues I35 to L247 are vinculin/alpha-catenin homology 1 (VH1) region. The stretch at A387–E414 forms a coiled coil. The vinculin/alpha-catenin homology 2 (VH2) region stretch occupies residues P552–T696. The interval G737 to I784 is disordered. Residues A745–V756 are compositionally biased toward basic and acidic residues. A compositionally biased stretch (low complexity) spans S771–I784.

It belongs to the vinculin/alpha-catenin family. As to quaternary structure, interacts with slo-1 (via C-terminus); the interaction is required for localization of slo-1 to dense bodies in body wall muscle cells. Interacts (via N-terminus) with dystrophin complex member dyb-1 (via C-terminus); the interaction is required for localization of the dystrophin complex and ctn-1 near dense bodies in muscle cells. Expressed in body wall muscles, vulval muscles, stomatointestinal cells and pharyngeal muscle cells. Expressed in enteric muscles, nerve ring neurons and in the ventral nerve cord.

It is found in the cytoplasm. Functionally, required for slo-1 potassium ion channel clustering at presynaptic terminals and in egg-laying muscles; clustering of slo-1 mediates the intoxicating and sedatory effects of ethanol on worms. Required for slo-1 localization to dense bodies in body wall muscle cells. Maintains the localization of the dystrophin complex near muscle cell dense bodies via its interaction with complex member dyb-1 which is required for slo-1 localization in muscle while slo-1 localization in neurons is independent of the dystrophin complex. This chain is Alpha-catulin, found in Caenorhabditis elegans.